The following is a 157-amino-acid chain: Ribosome maturation factor RimP (157 aa).

This sequence belongs to the RimP family.

It is found in the cytoplasm. Its function is as follows. Required for maturation of 30S ribosomal subunits. The polypeptide is Ribosome maturation factor RimP (Limosilactobacillus reuteri (strain DSM 20016) (Lactobacillus reuteri)).